Consider the following 259-residue polypeptide: Phosphate import ATP-binding protein PstB 2 (259 aa).

The 243-residue stretch at 12 to 254 (ISARGLNVHY…PKEPLTQGYI (243 aa)) folds into the ABC transporter domain. An ATP-binding site is contributed by 44 to 51 (GPSGCGKS).

The protein belongs to the ABC transporter superfamily. Phosphate importer (TC 3.A.1.7) family. The complex is composed of two ATP-binding proteins (PstB), two transmembrane proteins (PstC and PstA) and a solute-binding protein (PstS).

It localises to the cell inner membrane. The catalysed reaction is phosphate(out) + ATP + H2O = ADP + 2 phosphate(in) + H(+). In terms of biological role, part of the ABC transporter complex PstSACB involved in phosphate import. Responsible for energy coupling to the transport system. The polypeptide is Phosphate import ATP-binding protein PstB 2 (Paramagnetospirillum magneticum (strain ATCC 700264 / AMB-1) (Magnetospirillum magneticum)).